The chain runs to 173 residues: Dual-action ribosomal maturation protein DarP (173 aa).

This sequence belongs to the DarP family.

Its subcellular location is the cytoplasm. Member of a network of 50S ribosomal subunit biogenesis factors which assembles along the 30S-50S interface, preventing incorrect 23S rRNA structures from forming. Promotes peptidyl transferase center (PTC) maturation. The polypeptide is Dual-action ribosomal maturation protein DarP (Pseudomonas putida (strain GB-1)).